We begin with the raw amino-acid sequence, 274 residues long: Large ribosomal subunit protein uL2cz/uL2cy (274 aa).

Disordered stretches follow at residues Met1 to Val22 and Met223 to Lys274.

The protein belongs to the universal ribosomal protein uL2 family. In terms of assembly, part of the 50S ribosomal subunit.

Its subcellular location is the plastid. The protein localises to the chloroplast. This chain is Large ribosomal subunit protein uL2cz/uL2cy (rpl2-A), found in Phaseolus vulgaris (Kidney bean).